The following is a 318-amino-acid chain: Ribonuclease Z (318 aa).

Residues His63, His65, Asp67, His68, His142, Asp210, and His268 each coordinate Zn(2+). Asp67 functions as the Proton acceptor in the catalytic mechanism.

It belongs to the RNase Z family. Homodimer. Zn(2+) serves as cofactor.

The enzyme catalyses Endonucleolytic cleavage of RNA, removing extra 3' nucleotides from tRNA precursor, generating 3' termini of tRNAs. A 3'-hydroxy group is left at the tRNA terminus and a 5'-phosphoryl group is left at the trailer molecule.. Its function is as follows. Zinc phosphodiesterase, which displays some tRNA 3'-processing endonuclease activity. Probably involved in tRNA maturation, by removing a 3'-trailer from precursor tRNA. In Thermobifida fusca (strain YX), this protein is Ribonuclease Z.